The sequence spans 537 residues: CTP synthase (537 aa).

The amidoligase domain stretch occupies residues Met1–Val267. Residue Ser13 participates in CTP binding. Residue Ser13 participates in UTP binding. Ser14–Ile19 contributes to the ATP binding site. Position 54 (Tyr54) interacts with L-glutamine. Asp71 serves as a coordination point for ATP. Positions 71 and 141 each coordinate Mg(2+). Residues Asp148–Glu150, Lys188–Gln193, and Lys224 contribute to the CTP site. Residues Lys188 to Gln193 and Lys224 each bind UTP. The 244-residue stretch at Lys292 to Val535 folds into the Glutamine amidotransferase type-1 domain. Gly354 is an L-glutamine binding site. The active-site Nucleophile; for glutamine hydrolysis is the Cys381. L-glutamine-binding positions include Leu382–Gln385, Glu405, and Arg463. Residues His508 and Glu510 contribute to the active site.

It belongs to the CTP synthase family. As to quaternary structure, homotetramer.

It carries out the reaction UTP + L-glutamine + ATP + H2O = CTP + L-glutamate + ADP + phosphate + 2 H(+). The enzyme catalyses L-glutamine + H2O = L-glutamate + NH4(+). It catalyses the reaction UTP + NH4(+) + ATP = CTP + ADP + phosphate + 2 H(+). It functions in the pathway pyrimidine metabolism; CTP biosynthesis via de novo pathway; CTP from UDP: step 2/2. With respect to regulation, allosterically activated by GTP, when glutamine is the substrate; GTP has no effect on the reaction when ammonia is the substrate. The allosteric effector GTP functions by stabilizing the protein conformation that binds the tetrahedral intermediate(s) formed during glutamine hydrolysis. Inhibited by the product CTP, via allosteric rather than competitive inhibition. In terms of biological role, catalyzes the ATP-dependent amination of UTP to CTP with either L-glutamine or ammonia as the source of nitrogen. Regulates intracellular CTP levels through interactions with the four ribonucleotide triphosphates. The polypeptide is CTP synthase (Lactiplantibacillus plantarum (strain ATCC BAA-793 / NCIMB 8826 / WCFS1) (Lactobacillus plantarum)).